Consider the following 198-residue polypeptide: Ribonuclease HII (198 aa).

An RNase H type-2 domain is found at 10–198 (HLVAGVDEVG…PVRRALGIAS (189 aa)). 3 residues coordinate a divalent metal cation: D16, E17, and D108.

The protein belongs to the RNase HII family. It depends on Mn(2+) as a cofactor. Mg(2+) serves as cofactor.

It localises to the cytoplasm. It catalyses the reaction Endonucleolytic cleavage to 5'-phosphomonoester.. Its function is as follows. Endonuclease that specifically degrades the RNA of RNA-DNA hybrids. This is Ribonuclease HII from Cronobacter sakazakii (strain ATCC BAA-894) (Enterobacter sakazakii).